The following is a 990-amino-acid chain: F-box/LRR-repeat protein 15 (990 aa).

The F-box domain maps to 190 to 236; that stretch reads FEVHIDLTDDLLHMVFSFLNHVDLCRSAMVCRQWRVASAHEDFWRVL. 22 LRR repeats span residues 237 to 258, 280 to 303, 317 to 341, 348 to 373, 397 to 423, 441 to 465, 466 to 477, 478 to 503, 519 to 542, 550 to 574, 589 to 612, 614 to 633, 640 to 652, 653 to 678, 734 to 756, 758 to 782, 785 to 809, 813 to 839, 882 to 893, 894 to 914, 915 to 937, and 949 to 973; these read NFENIRISMEQFENMCSRYPNA, LRNLEVLTIGKGHISESFFQALGE, LGNGAQEIHLSHDRLRELKITKCRV, CPQLRSLSLKRSNMSQAMLNCPLLQL, LESLDVSNCSCVSDETLREIAQACANL, LPMLTVLKLHSCEGITSASMTWIAN, SPALEVLELDNC, NLLTTVSLHLSRLQSISLVHCRKFTD, CPALRRITITSNALRRLALQKQEN, CHSLQEVDLSDCESLSNSVCKIFSD, CESLTAVRFCNSSLASLSLVGCRA, TSLELKCPRIEQICLDGCDH, QPVALRSLNLGIC, PKLSVLNIEAPYMVSLELKGCGVLSE, LPNLTVLDLSYTFLMNLEPVFKS, IQLKVLKLQACKYLTDSSLEPLYKE, LPALEELDLSYGTLCQTAIDDLLAC, LTHLSLNGCVNMHDLDWGSTSVHLFDY, FYHLSTLNLSLS, VNLKEVDLTCSNLVLLNLSNC, CSLEVLKLGCPRLASLFLQSCNM, and CSSLETLDLRFCPKISSVSMSKFRT.

This Arabidopsis thaliana (Mouse-ear cress) protein is F-box/LRR-repeat protein 15 (FBL15).